Reading from the N-terminus, the 269-residue chain is JmjC domain-containing protein 8 (269 aa).

A signal peptide spans 1-24 (MAAAGRRGLLLLFVLWMMVTVILP). N-linked (GlcNAc...) asparagine glycans are attached at residues N135, N145, and N214. One can recognise a JmjC domain in the interval 136–269 (DTLYFFGDNN…TSVFISTFLG (134 aa)).

Oligomer. Dimer. Interacts with PKM; regulates angiogenesis and metabolism. Post-translationally, N-glycosylated.

The protein localises to the endoplasmic reticulum lumen. It is found in the cytoplasm. In terms of biological role, functions as a positive regulator of TNF-induced NF-kappaB signaling. Regulates angiogenesis and cellular metabolism through interaction with PKM. This Mus musculus (Mouse) protein is JmjC domain-containing protein 8.